The chain runs to 224 residues: Phosphoglycolate phosphatase (224 aa).

Asp-10 (nucleophile) is an active-site residue. Asp-10, Asp-12, and Asp-176 together coordinate Mg(2+).

The protein belongs to the HAD-like hydrolase superfamily. CbbY/CbbZ/Gph/YieH family. Requires Mg(2+) as cofactor.

The enzyme catalyses 2-phosphoglycolate + H2O = glycolate + phosphate. It functions in the pathway organic acid metabolism; glycolate biosynthesis; glycolate from 2-phosphoglycolate: step 1/1. Specifically catalyzes the dephosphorylation of 2-phosphoglycolate. Is involved in the dissimilation of the intracellular 2-phosphoglycolate formed during the DNA repair of 3'-phosphoglycolate ends, a major class of DNA lesions induced by oxidative stress. The sequence is that of Phosphoglycolate phosphatase from Pasteurella multocida (strain Pm70).